We begin with the raw amino-acid sequence, 774 residues long: 5-methyltetrahydropteroyltriglutamate--homocysteine methyltransferase (774 aa).

Residues 24–27 (RELK) and Lys120 each bind 5-methyltetrahydropteroyltri-L-glutamate. L-homocysteine-binding positions include 446 to 448 (IGS) and Glu499. L-methionine-binding positions include 446–448 (IGS) and Glu499. Trp576 is a 5-methyltetrahydropteroyltri-L-glutamate binding site. Asp614 provides a ligand contact to L-homocysteine. Asp614 is an L-methionine binding site. Glu620 is a binding site for 5-methyltetrahydropteroyltri-L-glutamate. 3 residues coordinate Zn(2+): His656, Cys658, and Glu680. His709 acts as the Proton donor in catalysis. Position 741 (Cys741) interacts with Zn(2+).

Belongs to the vitamin-B12 independent methionine synthase family. It depends on Zn(2+) as a cofactor.

The enzyme catalyses 5-methyltetrahydropteroyltri-L-glutamate + L-homocysteine = tetrahydropteroyltri-L-glutamate + L-methionine. Its pathway is amino-acid biosynthesis; L-methionine biosynthesis via de novo pathway; L-methionine from L-homocysteine (MetE route): step 1/1. In terms of biological role, catalyzes the transfer of a methyl group from 5-methyltetrahydrofolate to homocysteine resulting in methionine formation. This chain is 5-methyltetrahydropteroyltriglutamate--homocysteine methyltransferase, found in Streptomyces griseus subsp. griseus (strain JCM 4626 / CBS 651.72 / NBRC 13350 / KCC S-0626 / ISP 5235).